Reading from the N-terminus, the 236-residue chain is Putative protein ZBED10P (236 aa).

The polypeptide is Putative protein ZBED10P (Homo sapiens (Human)).